Consider the following 365-residue polypeptide: UDP-N-acetylglucosamine--N-acetylmuramyl-(pentapeptide) pyrophosphoryl-undecaprenol N-acetylglucosamine transferase (365 aa).

UDP-N-acetyl-alpha-D-glucosamine contacts are provided by residues 10 to 12, asparagine 128, arginine 170, serine 199, isoleucine 250, and glutamine 295; that span reads TGG.

It belongs to the glycosyltransferase 28 family. MurG subfamily.

It localises to the cell inner membrane. The catalysed reaction is di-trans,octa-cis-undecaprenyl diphospho-N-acetyl-alpha-D-muramoyl-L-alanyl-D-glutamyl-meso-2,6-diaminopimeloyl-D-alanyl-D-alanine + UDP-N-acetyl-alpha-D-glucosamine = di-trans,octa-cis-undecaprenyl diphospho-[N-acetyl-alpha-D-glucosaminyl-(1-&gt;4)]-N-acetyl-alpha-D-muramoyl-L-alanyl-D-glutamyl-meso-2,6-diaminopimeloyl-D-alanyl-D-alanine + UDP + H(+). It participates in cell wall biogenesis; peptidoglycan biosynthesis. Functionally, cell wall formation. Catalyzes the transfer of a GlcNAc subunit on undecaprenyl-pyrophosphoryl-MurNAc-pentapeptide (lipid intermediate I) to form undecaprenyl-pyrophosphoryl-MurNAc-(pentapeptide)GlcNAc (lipid intermediate II). The chain is UDP-N-acetylglucosamine--N-acetylmuramyl-(pentapeptide) pyrophosphoryl-undecaprenol N-acetylglucosamine transferase from Chlorobium luteolum (strain DSM 273 / BCRC 81028 / 2530) (Pelodictyon luteolum).